The chain runs to 430 residues: Adenylosuccinate synthetase (430 aa).

GTP contacts are provided by residues 12 to 18 and 40 to 42; these read GDEGKGK and GHT. The active-site Proton acceptor is the D13. Mg(2+) is bound by residues D13 and G40. Residues 13–16, 38–41, T128, R142, Q223, T238, and R302 each bind IMP; these read DEGK and NAGH. The Proton donor role is filled by H41. 298 to 304 contributes to the substrate binding site; that stretch reads TTTGRPR. GTP-binding positions include R304, 330-332, and 413-415; these read SID and SVG.

The protein belongs to the adenylosuccinate synthetase family. As to quaternary structure, homodimer. Mg(2+) is required as a cofactor.

The protein resides in the cytoplasm. It catalyses the reaction IMP + L-aspartate + GTP = N(6)-(1,2-dicarboxyethyl)-AMP + GDP + phosphate + 2 H(+). It functions in the pathway purine metabolism; AMP biosynthesis via de novo pathway; AMP from IMP: step 1/2. Its function is as follows. Plays an important role in the de novo pathway of purine nucleotide biosynthesis. Catalyzes the first committed step in the biosynthesis of AMP from IMP. This Lactococcus lactis subsp. cremoris (strain SK11) protein is Adenylosuccinate synthetase.